An 84-amino-acid polypeptide reads, in one-letter code: Small ribosomal subunit protein bS18 (84 aa).

Belongs to the bacterial ribosomal protein bS18 family. As to quaternary structure, part of the 30S ribosomal subunit. Forms a tight heterodimer with protein bS6.

Its function is as follows. Binds as a heterodimer with protein bS6 to the central domain of the 16S rRNA, where it helps stabilize the platform of the 30S subunit. The polypeptide is Small ribosomal subunit protein bS18 (Methylorubrum extorquens (strain CM4 / NCIMB 13688) (Methylobacterium extorquens)).